The primary structure comprises 179 residues: Ribosome-recycling factor (179 aa).

The protein belongs to the RRF family.

It is found in the cytoplasm. Functionally, responsible for the release of ribosomes from messenger RNA at the termination of protein biosynthesis. May increase the efficiency of translation by recycling ribosomes from one round of translation to another. This is Ribosome-recycling factor from Chlamydia trachomatis serovar L2b (strain UCH-1/proctitis).